Reading from the N-terminus, the 793-residue chain is MELRSWLLWVVAAAGAVVLLAADAQGQKIFTNTWAVHIPGGPAVADRVAQKHGFHNLGQIFGDYYHFWHRAVTKRSLSPHRPRHSRLQREPQVKWLEQQVAKRRAKRDVYQEPTDPKFPQQWYLSGVTQRDLNVKEAWAQGFTGHGIVVSILDDGIEKNHPDLAGNYDPGASFDVNDQDPDPQPRYTQMNDNRHGTRCAGEVAAVANNGVCGVGVAYNARIGGVRMLDGEVTDAVEARSLGLNPNHIHIYSASWGPEDDGKTVDGPARLAEEAFFRGVSQGRGGLGSIFVWASGNGGREHDSCNCDGYTNSIYTLSISSATQFGNVPWYSEACSSTLATTYSSGNQNEKQIVTTDLRQKCTESHTGTSASAPLAAGIIALTLEANKNLTWRDMQHLVVQTSKPAHLNADDWATNGVGRKVSHSYGYGLLDAGAMVALAQNWTTVAPQRKCIVEILVEPKDIGKRLEVRKAVTACLGEPNHITRLEHVQARLTLSYNRRGDLAIHLISPMGTRSTLLAARPHDYSADGFNDWAFMTTHSWDEDPAGEWVLEIENTSEANNYGTLTKFTLVLYGTAPEGLSTPPESSGCKTLTSSQACVVCEEGYSLHQKSCVQHCPPGFIPQVLDTHYSTENDVEIIRASVCTPCHASCATCQGPAPTDCLSCPSHASLDPVEQTCSRQSQSSRESRPQQQPPALRPEVEMEPRLQAGLASHLPEVLAGLSCLIIVLIFGIVFLFLHRCSGFSFRGVKVYTMDRGLISYKGLPPEAWQEECPSDSEEDEGRGERTAFIKDQSAL.

The first 24 residues, 1 to 24 (MELRSWLLWVVAAAGAVVLLAADA), serve as a signal peptide directing secretion. A propeptide spans 25–107 (QGQKIFTNTW…QQVAKRRAKR (83 aa)) (inhibition peptide). The Lumenal portion of the chain corresponds to 108-714 (DVYQEPTDPK…QAGLASHLPE (607 aa)). Ca(2+) is bound at residue Asp115. Positions 121–435 (QWYLSGVTQR…YGLLDAGAMV (315 aa)) constitute a Peptidase S8 domain. Catalysis depends on Asp153, which acts as the Charge relay system. Asp154 serves as a coordination point for substrate. The disordered stretch occupies residues 160 to 182 (HPDLAGNYDPGASFDVNDQDPDP). Ca(2+) is bound by residues Asp162, Asp174, Asp179, and Asp181. Position 191–192 (191–192 (DN)) interacts with substrate. Catalysis depends on His194, which acts as the Charge relay system. Residues Val205, Asn208, Val210, and Gly212 each contribute to the Ca(2+) site. Intrachain disulfides connect Cys211–Cys360 and Cys303–Cys333. Substrate contacts are provided by residues Glu236, 253 to 258 (SWGPED), Asp264, and 292 to 295 (ASGN). Residue Asp258 participates in Ca(2+) binding. Asp301 contacts Ca(2+). Positions 306 and 308 each coordinate substrate. Residue Glu331 coordinates Ca(2+). Ser368 functions as the Charge relay system in the catalytic mechanism. Ser368 is a substrate binding site. Asn387 and Asn440 each carry an N-linked (GlcNAc...) asparagine glycan. The P/Homo B domain maps to 444 to 576 (VAPQRKCIVE…TLVLYGTAPE (133 aa)). Residues Cys450 and Cys474 are joined by a disulfide bond. The Cell attachment site motif lies at 498–500 (RGD). FU repeat units follow at residues 577 to 620 (GLST…GFIP) and 638 to 681 (ASVC…QSQS). Residues 673–697 (QTCSRQSQSSRESRPQQQPPALRPE) form a disordered region. Low complexity predominate over residues 676-688 (SRQSQSSRESRPQ). The helical transmembrane segment at 715 to 735 (VLAGLSCLIIVLIFGIVFLFL) threads the bilayer. Topologically, residues 736-793 (HRCSGFSFRGVKVYTMDRGLISYKGLPPEAWQEECPSDSEEDEGRGERTAFIKDQSAL) are cytoplasmic. The tract at residues 758–761 (YKGL) is cell surface signal. The segment covering 766-779 (WQEECPSDSEEDEG) has biased composition (acidic residues). Residues 766–793 (WQEECPSDSEEDEGRGERTAFIKDQSAL) are disordered. A phosphoserine mark is found at Ser772 and Ser774. Residues 772-778 (SDSEEDE) carry the Trans Golgi network signal motif.

Belongs to the peptidase S8 family. Furin subfamily. As to quaternary structure, interacts with FLNA. Binds to PACS1 which mediates TGN localization and connection to clathrin adapters. Requires Ca(2+) as cofactor. The inhibition peptide, which plays the role of an intramolecular chaperone, is autocatalytically removed in the endoplasmic reticulum (ER) and remains non-covalently bound to furin as a potent autoinhibitor. Following transport to the trans Golgi, a second cleavage within the inhibition propeptide results in propeptide dissociation and furin activation. Post-translationally, phosphorylation is required for TGN localization of the endoprotease. In vivo, exists as di-, mono- and non-phosphorylated forms. As to expression, seems to be expressed ubiquitously. Expressed in islets of Langerhans.

Its subcellular location is the golgi apparatus. It localises to the trans-Golgi network membrane. The protein localises to the cell membrane. The protein resides in the secreted. It is found in the endosome membrane. The enzyme catalyses Release of mature proteins from their proproteins by cleavage of -Arg-Xaa-Yaa-Arg-|-Zaa- bonds, where Xaa can be any amino acid and Yaa is Arg or Lys. Releases albumin, complement component C3 and von Willebrand factor from their respective precursors.. With respect to regulation, inhibited by the not secondly cleaved propeptide. Inhibited by m-guanidinomethyl-phenylacetyl-Arg-Val-Arg-(amidomethyl)-benzamidine (m-guanidinomethyl-Phac-RVR-Amb) and 4-guanidinomethyl-phenylacetyl-Arg-Tle-Arg-4-amidinobenzylamide (MI-1148). Inhibited by Decanoyl-Arg-Val-Lys-Arg-chloromethylketone (decanoyl-RVKR-CMK). Inhibited by heparin/heparan sulfate-binding. Ubiquitous endoprotease within constitutive secretory pathways capable of cleavage at the RX(K/R)R consensus motif. Mediates processing of TGFB1, an essential step in TGF-beta-1 activation. Converts through proteolytic cleavage the non-functional Brain natriuretic factor prohormone into its active hormone BNP(1-45). By mediating processing of accessory subunit ATP6AP1/Ac45 of the V-ATPase, regulates the acidification of dense-core secretory granules in islets of Langerhans cells. The sequence is that of Furin (Furin) from Mus musculus (Mouse).